Reading from the N-terminus, the 182-residue chain is Protein SYM1 (182 aa).

3 consecutive transmembrane segments (helical) span residues 51 to 70 (TLRP…DKWY), 98 to 118 (LIFA…MEGG), and 135 to 155 (LLAN…LVPV).

This sequence belongs to the peroxisomal membrane protein PXMP2/4 family.

The protein resides in the mitochondrion inner membrane. Its function is as follows. May be involved in cellular response to stress. Required to maintain mitochondrial DNA (mtDNA) integrity and stability. This Eremothecium gossypii (strain ATCC 10895 / CBS 109.51 / FGSC 9923 / NRRL Y-1056) (Yeast) protein is Protein SYM1 (SYM1).